A 298-amino-acid chain; its full sequence is Putative cysteine protease YopT-like blr2058 (298 aa).

Positions 1-14 (MYNRVDGEYAHTEQ) are enriched in basic and acidic residues. Disordered stretches follow at residues 1 to 25 (MYNR…ADGS) and 59 to 80 (SDAI…SSSS). The span at 65–80 (SSNTSGLSTSSLSSSS) shows a compositional bias: low complexity. C109 is a catalytic residue. Over residues 137 to 162 (NHRSAARRQEQSEKLKTQLKEDKAEG) the composition is skewed to basic and acidic residues. The disordered stretch occupies residues 137–166 (NHRSAARRQEQSEKLKTQLKEDKAEGSHNF). Residues H223 and D238 contribute to the active site.

This sequence belongs to the peptidase C58 family.

Its function is as follows. Potential cysteine protease, which may play a central role after invasion of host cell. In Bradyrhizobium diazoefficiens (strain JCM 10833 / BCRC 13528 / IAM 13628 / NBRC 14792 / USDA 110), this protein is Putative cysteine protease YopT-like blr2058.